The sequence spans 165 residues: Transcription antitermination protein NusB (165 aa).

This sequence belongs to the NusB family.

Functionally, involved in transcription antitermination. Required for transcription of ribosomal RNA (rRNA) genes. Binds specifically to the boxA antiterminator sequence of the ribosomal RNA (rrn) operons. The sequence is that of Transcription antitermination protein NusB from Nitratidesulfovibrio vulgaris (strain DSM 19637 / Miyazaki F) (Desulfovibrio vulgaris).